The chain runs to 388 residues: Succinate--CoA ligase [ADP-forming] subunit beta (388 aa).

Residues 9–244 (KSLFAEYGLP…PSQDDAREAH (236 aa)) enclose the ATP-grasp domain. ATP contacts are provided by residues Lys-46, 53-55 (GRG), Glu-99, Thr-102, and Glu-107. 2 residues coordinate Mg(2+): Asn-199 and Asp-213. Substrate-binding positions include Asn-264 and 321 to 323 (GIV).

This sequence belongs to the succinate/malate CoA ligase beta subunit family. As to quaternary structure, heterotetramer of two alpha and two beta subunits. It depends on Mg(2+) as a cofactor.

The enzyme catalyses succinate + ATP + CoA = succinyl-CoA + ADP + phosphate. It carries out the reaction GTP + succinate + CoA = succinyl-CoA + GDP + phosphate. Its pathway is carbohydrate metabolism; tricarboxylic acid cycle; succinate from succinyl-CoA (ligase route): step 1/1. Its function is as follows. Succinyl-CoA synthetase functions in the citric acid cycle (TCA), coupling the hydrolysis of succinyl-CoA to the synthesis of either ATP or GTP and thus represents the only step of substrate-level phosphorylation in the TCA. The beta subunit provides nucleotide specificity of the enzyme and binds the substrate succinate, while the binding sites for coenzyme A and phosphate are found in the alpha subunit. This Shewanella sp. (strain MR-4) protein is Succinate--CoA ligase [ADP-forming] subunit beta.